Consider the following 178-residue polypeptide: Large ribosomal subunit protein uL5 (178 aa).

Belongs to the universal ribosomal protein uL5 family. As to quaternary structure, part of the 50S ribosomal subunit; part of the 5S rRNA/L5/L18/L25 subcomplex. Contacts the 5S rRNA and the P site tRNA. Forms a bridge to the 30S subunit in the 70S ribosome.

In terms of biological role, this is one of the proteins that bind and probably mediate the attachment of the 5S RNA into the large ribosomal subunit, where it forms part of the central protuberance. In the 70S ribosome it contacts protein S13 of the 30S subunit (bridge B1b), connecting the 2 subunits; this bridge is implicated in subunit movement. Contacts the P site tRNA; the 5S rRNA and some of its associated proteins might help stabilize positioning of ribosome-bound tRNAs. The chain is Large ribosomal subunit protein uL5 from Prochlorococcus marinus subsp. pastoris (strain CCMP1986 / NIES-2087 / MED4).